A 386-amino-acid chain; its full sequence is DNA-directed RNA polymerase subunit Rpo1C (386 aa).

Belongs to the RNA polymerase beta' chain family. As to quaternary structure, part of the RNA polymerase complex.

Its subcellular location is the cytoplasm. The catalysed reaction is RNA(n) + a ribonucleoside 5'-triphosphate = RNA(n+1) + diphosphate. Functionally, DNA-dependent RNA polymerase (RNAP) catalyzes the transcription of DNA into RNA using the four ribonucleoside triphosphates as substrates. Forms part of the jaw domain. The chain is DNA-directed RNA polymerase subunit Rpo1C from Methanococcus maripaludis (strain C7 / ATCC BAA-1331).